A 422-amino-acid polypeptide reads, in one-letter code: GTPase Obg (422 aa).

Positions Met1–Leu158 constitute an Obg domain. The OBG-type G domain occupies Ala159–Glu329. GTP contacts are provided by residues Gly165–Ser172, Phe190–Thr194, Asp212–Gly215, Asn282–Asp285, and Ser310–Val312. Residues Ser172 and Thr192 each coordinate Mg(2+). An OCT domain is found at Val337 to Glu422.

It belongs to the TRAFAC class OBG-HflX-like GTPase superfamily. OBG GTPase family. Monomer. Requires Mg(2+) as cofactor.

The protein localises to the cytoplasm. In terms of biological role, an essential GTPase which binds GTP, GDP and possibly (p)ppGpp with moderate affinity, with high nucleotide exchange rates and a fairly low GTP hydrolysis rate. Plays a role in control of the cell cycle, stress response, ribosome biogenesis and in those bacteria that undergo differentiation, in morphogenesis control. This is GTPase Obg from Pelotomaculum thermopropionicum (strain DSM 13744 / JCM 10971 / SI).